Here is a 377-residue protein sequence, read N- to C-terminus: Killer cell immunoglobulin-like receptor 2DL4 (377 aa).

A signal peptide spans Met-1–Val-21. Topologically, residues Trp-22–His-242 are extracellular. 2 consecutive Ig-like C2-type domains span residues Gly-44 to Ser-104 and Gly-139 to Ser-202. Cys-51 and Cys-97 are oxidised to a cystine. Asn-141 and Asn-175 each carry an N-linked (GlcNAc...) asparagine glycan. A disulfide bond links Cys-146 and Cys-195. The chain crosses the membrane as a helical span at residues Ala-243–His-263. Residues Arg-264 to Ile-377 lie on the Cytoplasmic side of the membrane. The segment at Pro-338–Ile-377 is disordered. The segment covering Leu-352 to Ile-377 has biased composition (polar residues).

This sequence belongs to the immunoglobulin superfamily. In terms of assembly, interacts with peptide-bound HLA-G-B2M heterotrimeric complex. Interacts with ARRB2. As to expression, expressed in decidual NK cells and innate lymphoid cell type I (ILC1). Expressed in a subset of peripheral NK cells.

The protein resides in the cell membrane. Its subcellular location is the early endosome membrane. In terms of biological role, receptor for non-classical major histocompatibility class Ib HLA-G molecules. Recognizes HLA-G in complex with B2M/beta-2 microglobulin and a nonamer self-peptide (peptide-bound HLA-G-B2M). In decidual NK cells, binds peptide-bound HLA-G-B2M complex and triggers NK cell senescence-associated secretory phenotype as a molecular switch to promote vascular remodeling and fetal growth in early pregnancy. May play a role in balancing tolerance and antiviral-immunity at maternal-fetal interface by keeping in check the effector functions of NK, CD8+ T cells and B cells. Upon interaction with peptide-bound HLA-G-B2M, initiates signaling from the endosomal compartment leading to downstream activation of PRKDC-XRCC5 and AKT1, and ultimately triggering NF-kappa-B-dependent pro-inflammatory response. In Homo sapiens (Human), this protein is Killer cell immunoglobulin-like receptor 2DL4.